An 820-amino-acid polypeptide reads, in one-letter code: G-type lectin S-receptor-like serine/threonine-protein kinase At1g11280 (820 aa).

The first 28 residues, 1 to 28 (MGIHLGEIGIVLFPWFLWLSLFLSCGYA), serve as a signal peptide directing secretion. The Bulb-type lectin domain maps to 29–148 (AITISSPLTL…VSENLLWQSF (120 aa)). Over 29 to 434 (AITISSPLTL…SELAGSRRTK (406 aa)) the chain is Extracellular. N-linked (GlcNAc...) asparagine glycosylation is found at Asn-57, Asn-92, Asn-98, Asn-241, and Asn-272. One can recognise an EGF-like domain in the interval 283–319 (PANLCDLYGACGPFGLCVTSNPTKCKCMKGFVPKYKE). Disulfide bonds link Cys-287–Cys-299 and Cys-293–Cys-307. Residues Asn-325, Asn-341, and Asn-384 are each glycosylated (N-linked (GlcNAc...) asparagine). Positions 338-422 (CQANLSTKTQ…VGGEFLSIRL (85 aa)) constitute a PAN domain. Disulfide bonds link Cys-377/Cys-398 and Cys-381/Cys-387. The helical transmembrane segment at 435–455 (IIVGSISLSIFVILAFGSYKY) threads the bilayer. Over 456–820 (WRYRAKQNVG…HVTQTEIYGR (365 aa)) the chain is Cytoplasmic. The 288-residue stretch at 505-792 (FNVSNKLGQG…DLPRPKQPLF (288 aa)) folds into the Protein kinase domain. Residues 511–519 (LGQGGFGPV) and Lys-533 contribute to the ATP site. Residues Ser-539 and Ser-554 each carry the phosphoserine modification. A caM-binding region spans residues 594–611 (TLKLQIDWPKRFNIIQGV). Asp-630 acts as the Proton acceptor in catalysis. A phosphoserine mark is found at Ser-634 and Ser-647. Thr-664 carries the phosphothreonine modification. Residues Ser-707, Ser-708, and Ser-808 each carry the phosphoserine modification. Thr-815 is modified (phosphothreonine).

The protein belongs to the protein kinase superfamily. Ser/Thr protein kinase family.

It localises to the cell membrane. It catalyses the reaction L-seryl-[protein] + ATP = O-phospho-L-seryl-[protein] + ADP + H(+). The catalysed reaction is L-threonyl-[protein] + ATP = O-phospho-L-threonyl-[protein] + ADP + H(+). In Arabidopsis thaliana (Mouse-ear cress), this protein is G-type lectin S-receptor-like serine/threonine-protein kinase At1g11280.